The chain runs to 336 residues: Dihydroorotate dehydrogenase (quinone) (336 aa).

FMN-binding positions include 62–66 (AGLDK) and Thr86. Residue Lys66 participates in substrate binding. 111–115 (NRMGF) is a substrate binding site. FMN is bound by residues Asn139 and Asn172. Asn172 serves as a coordination point for substrate. Ser175 acts as the Nucleophile in catalysis. Position 177 (Asn177) interacts with substrate. FMN-binding residues include Lys217 and Thr245. 246-247 (NT) lines the substrate pocket. FMN is bound by residues Gly268, Gly297, and 318–319 (YS).

Belongs to the dihydroorotate dehydrogenase family. Type 2 subfamily. In terms of assembly, monomer. It depends on FMN as a cofactor.

It is found in the cell membrane. The enzyme catalyses (S)-dihydroorotate + a quinone = orotate + a quinol. Its pathway is pyrimidine metabolism; UMP biosynthesis via de novo pathway; orotate from (S)-dihydroorotate (quinone route): step 1/1. Functionally, catalyzes the conversion of dihydroorotate to orotate with quinone as electron acceptor. The polypeptide is Dihydroorotate dehydrogenase (quinone) (Escherichia fergusonii (strain ATCC 35469 / DSM 13698 / CCUG 18766 / IAM 14443 / JCM 21226 / LMG 7866 / NBRC 102419 / NCTC 12128 / CDC 0568-73)).